A 215-amino-acid chain; its full sequence is Cytochrome b6 (215 aa).

The chain crosses the membrane as a helical span at residues 32-52; the sequence is VFYCFGGMTLTCFLVQLATGF. C35 lines the heme c pocket. Residues H86 and H100 each contribute to the heme b site. Helical transmembrane passes span 90–110, 116–136, and 186–206; these read ASMM…TGGF, LTWI…VTGY, and LHTL…FLMI. Heme b is bound by residues H187 and H202.

The protein belongs to the cytochrome b family. PetB subfamily. As to quaternary structure, the 4 large subunits of the cytochrome b6-f complex are cytochrome b6, subunit IV (17 kDa polypeptide, PetD), cytochrome f and the Rieske protein, while the 4 small subunits are PetG, PetL, PetM and PetN. The complex functions as a dimer. It depends on heme b as a cofactor. Requires heme c as cofactor.

It localises to the plastid. It is found in the chloroplast thylakoid membrane. Functionally, component of the cytochrome b6-f complex, which mediates electron transfer between photosystem II (PSII) and photosystem I (PSI), cyclic electron flow around PSI, and state transitions. In Cyanidium caldarium (Red alga), this protein is Cytochrome b6.